Reading from the N-terminus, the 370-residue chain is Aminomethyltransferase (370 aa).

Belongs to the GcvT family. In terms of assembly, the glycine cleavage system is composed of four proteins: P, T, L and H.

It catalyses the reaction N(6)-[(R)-S(8)-aminomethyldihydrolipoyl]-L-lysyl-[protein] + (6S)-5,6,7,8-tetrahydrofolate = N(6)-[(R)-dihydrolipoyl]-L-lysyl-[protein] + (6R)-5,10-methylene-5,6,7,8-tetrahydrofolate + NH4(+). Its function is as follows. The glycine cleavage system catalyzes the degradation of glycine. The protein is Aminomethyltransferase of Clostridium botulinum (strain Okra / Type B1).